A 508-amino-acid chain; its full sequence is ATP synthase subunit alpha (508 aa).

Residue glycine 170 to threonine 177 coordinates ATP.

The protein belongs to the ATPase alpha/beta chains family. F-type ATPases have 2 components, CF(1) - the catalytic core - and CF(0) - the membrane proton channel. CF(1) has five subunits: alpha(3), beta(3), gamma(1), delta(1), epsilon(1). CF(0) has three main subunits: a(1), b(2) and c(9-12). The alpha and beta chains form an alternating ring which encloses part of the gamma chain. CF(1) is attached to CF(0) by a central stalk formed by the gamma and epsilon chains, while a peripheral stalk is formed by the delta and b chains.

The protein localises to the cell inner membrane. It carries out the reaction ATP + H2O + 4 H(+)(in) = ADP + phosphate + 5 H(+)(out). Functionally, produces ATP from ADP in the presence of a proton gradient across the membrane. The alpha chain is a regulatory subunit. In Dictyoglomus turgidum (strain DSM 6724 / Z-1310), this protein is ATP synthase subunit alpha.